A 205-amino-acid chain; its full sequence is DNA-directed RNA polymerase RPB5 homolog (205 aa).

It belongs to the archaeal RpoH/eukaryotic RPB5 RNA polymerase subunit family. In terms of assembly, part of the viral DNA-directed RNA polymerase that consists of 8 polII-like subunits (RPB1, RPB2, RPB3, RPB5, RPB6, RPB7, RPB9, RPB10), a capping enzyme and a termination factor.

It localises to the host cytoplasm. It is found in the virion. Its function is as follows. Component of the DNA-directed RNA polymerase (RNAP) that catalyzes the transcription in the cytoplasm of viral DNA into RNA using the four ribonucleoside triphosphates as substrates. In Ornithodoros (relapsing fever ticks), this protein is DNA-directed RNA polymerase RPB5 homolog.